The chain runs to 206 residues: dITP/XTP pyrophosphatase (206 aa).

Residue 7 to 12 (SCHGYK) participates in substrate binding. Asp70 serves as the catalytic Proton acceptor. Mg(2+) is bound at residue Asp70. Residues Thr71, 154–157 (FGYD), Lys177, and 182–183 (HR) contribute to the substrate site.

It belongs to the HAM1 NTPase family. As to quaternary structure, homodimer. Mg(2+) serves as cofactor.

It carries out the reaction XTP + H2O = XMP + diphosphate + H(+). The enzyme catalyses dITP + H2O = dIMP + diphosphate + H(+). It catalyses the reaction ITP + H2O = IMP + diphosphate + H(+). In terms of biological role, pyrophosphatase that catalyzes the hydrolysis of nucleoside triphosphates to their monophosphate derivatives, with a high preference for the non-canonical purine nucleotides XTP (xanthosine triphosphate), dITP (deoxyinosine triphosphate) and ITP. Seems to function as a house-cleaning enzyme that removes non-canonical purine nucleotides from the nucleotide pool, thus preventing their incorporation into DNA/RNA and avoiding chromosomal lesions. This Chlamydia caviae (strain ATCC VR-813 / DSM 19441 / 03DC25 / GPIC) (Chlamydophila caviae) protein is dITP/XTP pyrophosphatase.